The chain runs to 130 residues: Capsid protein (130 aa).

Residues 32–105 form a viral RNA-binding region; sequence EWISSNSRSQ…FATNSDCELI (74 aa).

Belongs to the Leviviricetes capsid protein family. In terms of assembly, homodimer. The capsid proteins form dimers that assemble by group of 5. Twelve such pentamers are linked together with free dimers. The homodimers binds to the viral RNA via an operator hairpin, but also to many other RNA sequences in the viral genome; this interaction probably shifts the virus from the replicative to the assembly phase and ensures specific encapsidation of the viral genome.

The protein localises to the virion. Its function is as follows. Capsid protein self-assembles to form an icosahedral capsid with a T=3 symmetry, about 26 nm in diameter, and consisting of 89 capsid proteins dimers (178 capsid proteins). Involved in viral genome encapsidation through the interaction between a capsid protein dimer and the multiple packaging signals present in the RNA genome. The capsid also contains 1 copy of the A2 maturation protein. Functionally, acts as a translational repressor of viral replicase synthesis late in infection. This latter function is the result of capsid protein interaction with an RNA hairpin which contains the replicase ribosome-binding site. The chain is Capsid protein from Escherichia coli (Bacteriophage MS2).